We begin with the raw amino-acid sequence, 66 residues long: DNA-directed RNA polymerase subunit Rpo10 (66 aa).

Zn(2+) is bound by residues Cys7, Cys10, Cys44, and Cys45.

The protein belongs to the archaeal Rpo10/eukaryotic RPB10 RNA polymerase subunit family. Part of the 13-subunit RNA polymerase complex. It depends on Zn(2+) as a cofactor.

Its subcellular location is the cytoplasm. It catalyses the reaction RNA(n) + a ribonucleoside 5'-triphosphate = RNA(n+1) + diphosphate. DNA-dependent RNA polymerase (RNAP) catalyzes the transcription of DNA into RNA using the four ribonucleoside triphosphates as substrates. The protein is DNA-directed RNA polymerase subunit Rpo10 of Sulfolobus acidocaldarius (strain ATCC 33909 / DSM 639 / JCM 8929 / NBRC 15157 / NCIMB 11770).